We begin with the raw amino-acid sequence, 521 residues long: T-box transcription factor TBX5 (521 aa).

The tract at residues 1–45 is disordered; sequence MADTEEGFGLPSTPVDSEAKELQAEAKQDPQLGTTSKAPTSPQAA. The span at 17-28 shows a compositional bias: basic and acidic residues; the sequence is SEAKELQAEAKQ. Residues 31–45 show a composition bias toward polar residues; it reads QLGTTSKAPTSPQAA. Positions 63-238 form a DNA-binding region, T-box; sequence LWLKFHEVGT…NNPFAKGFRG (176 aa). 2 disordered regions span residues 254–281 and 332–352; these read EYPVVPRSTVRQKVSSNHSPFSGETRVL and STTEHPYKKPYMETSPAEEDP. Over residues 262-281 the composition is skewed to polar residues; the sequence is TVRQKVSSNHSPFSGETRVL.

As to quaternary structure, monomer. Homodimer (via the T-box); binds DNA as homodimer.

The protein localises to the nucleus. It is found in the cytoplasm. Functionally, DNA-binding protein that regulates the transcription of several genes and is involved in heart development and limb pattern formation. May bind to the core DNA motif of promoters. In Gallus gallus (Chicken), this protein is T-box transcription factor TBX5 (TBX5).